The primary structure comprises 100 residues: Putative antiporter subunit mnhF2 (100 aa).

3 helical membrane-spanning segments follow: residues I5–L25, V38–G60, and L70–F92.

It belongs to the CPA3 antiporters (TC 2.A.63) subunit F family. As to quaternary structure, may form a heterooligomeric complex that consists of seven subunits: mnhA2, mnhB2, mnhC2, mnhD2, mnhE2, mnhF2 and mnhG2.

The protein resides in the cell membrane. In Staphylococcus aureus (strain USA300), this protein is Putative antiporter subunit mnhF2 (mnhF2).